We begin with the raw amino-acid sequence, 139 residues long: 3-hydroxyacyl-[acyl-carrier-protein] dehydratase FabZ (139 aa).

Residue His-46 is part of the active site.

The protein belongs to the thioester dehydratase family. FabZ subfamily.

It localises to the cytoplasm. It carries out the reaction a (3R)-hydroxyacyl-[ACP] = a (2E)-enoyl-[ACP] + H2O. Its function is as follows. Involved in unsaturated fatty acids biosynthesis. Catalyzes the dehydration of short chain beta-hydroxyacyl-ACPs and long chain saturated and unsaturated beta-hydroxyacyl-ACPs. The polypeptide is 3-hydroxyacyl-[acyl-carrier-protein] dehydratase FabZ (Streptococcus pyogenes serotype M3 (strain ATCC BAA-595 / MGAS315)).